Here is a 127-residue protein sequence, read N- to C-terminus: Succinate dehydrogenase cytochrome b560 subunit (127 aa).

2 helical membrane passes run valine 36 to leucine 53 and asparagine 60 to leucine 83. Histidine 88 contacts heme. The helical transmembrane segment at leucine 109 to phenylalanine 126 threads the bilayer.

Belongs to the cytochrome b560 family. As to quaternary structure, forms part of complex II containing four subunits: a 70 kDa flavoprotein (FP), a 27 kDa iron-sulfur protein (IP), a cytochrome B and a membrane-anchoring protein. Requires heme as cofactor.

The protein resides in the mitochondrion inner membrane. The protein operates within carbohydrate metabolism; tricarboxylic acid cycle. In terms of biological role, membrane-anchoring subunit of succinate dehydrogenase (SDH) that is involved in complex II of the mitochondrial electron transport chain and is responsible for transferring electrons from succinate to ubiquinone (coenzyme Q). The polypeptide is Succinate dehydrogenase cytochrome b560 subunit (SDH3) (Chondrus crispus (Carrageen Irish moss)).